A 344-amino-acid chain; its full sequence is Eukaryotic translation initiation factor 2 subunit alpha (344 aa).

One can recognise an S1 motif domain in the interval 21–92 (DMAVMIQVKT…ERGYIDLSKR (72 aa)). S56 carries the post-translational modification Phosphoserine; by GCN2. The tract at residues 309–344 (LRMDNEEMSGDEGSEDEEEDTGMGEVDIDGGSGIIE) is disordered. The segment covering 314 to 336 (EEMSGDEGSEDEEEDTGMGEVDI) has biased composition (acidic residues). S317 and S322 each carry phosphoserine; by CK2.

It belongs to the eIF-2-alpha family. As to quaternary structure, eukaryotic translation initiation factor 2 eIF2 is a heterotrimeric complex composed of an alpha, a beta and a gamma subunit. Post-translationally, phosphorylated at Ser-56 by GCN2. Phosphorylated at Ser-317 and Ser-322 by CK2.

The protein resides in the cytoplasm. Its subcellular location is the cytosol. Functions in the early steps of protein synthesis by forming a ternary complex with GTP and initiator tRNA. This complex binds to a 40S ribosomal subunit, followed by mRNA binding to form a 43S pre-initiation complex. Junction of the 60S ribosomal subunit to form the 80S initiation complex is preceded by hydrolysis of the GTP bound to eIF-2 and release of an eIF-2-GDP binary complex. In order for eIF-2 to recycle and catalyze another round of initiation, the GDP bound to eIF-2 must exchange with GTP by way of a reaction catalyzed by eIF2B. In Arabidopsis thaliana (Mouse-ear cress), this protein is Eukaryotic translation initiation factor 2 subunit alpha.